Reading from the N-terminus, the 494-residue chain is Putative transporter SVOPL (494 aa).

10 consecutive transmembrane segments (helical) span residues 48–68 (IALFLIMGSTGVVEAMEIMLI), 86–106 (VAFVTTMVFFGYMVSSILFGL), 121–141 (FLWGAYFSLLTSFSPSYIWFV), 179–199 (VFWLAGSLLIISMASVVIPTI), 203–223 (WLIRIASIPGIILIMAFKFIP), 281–301 (TLQIWIIWLGISFAYYGVILA), 350–370 (IISTLGEIALNPLNILGINFL), 385–405 (LFFLLLNICTSSAGLIGFLFM), 431–451 (AIGMGTSGSLCRIGAMVAPFI), and 460–480 (FLGALCLFSSVCVVCAISAFT).

Belongs to the major facilitator superfamily.

Its subcellular location is the membrane. This Mus musculus (Mouse) protein is Putative transporter SVOPL (Svopl).